Consider the following 715-residue polypeptide: Fatty acid oxidation complex subunit alpha (715 aa).

The enoyl-CoA hydratase/isomerase stretch occupies residues 1 to 190; the sequence is MIYEGKAITV…KVGAVDAVVA (190 aa). Asp297 provides a ligand contact to substrate. Residues 312–715 are 3-hydroxyacyl-CoA dehydrogenase; the sequence is KDVKQAAVLG…MAKNGQSFFG (404 aa). NAD(+) is bound by residues Met325, Asp344, 401 to 403, Lys408, and Ser430; that span reads VVE. His451 (for 3-hydroxyacyl-CoA dehydrogenase activity) is an active-site residue. Asn454 lines the NAD(+) pocket. Positions 501 and 660 each coordinate substrate.

In the N-terminal section; belongs to the enoyl-CoA hydratase/isomerase family. The protein in the C-terminal section; belongs to the 3-hydroxyacyl-CoA dehydrogenase family. As to quaternary structure, heterotetramer of two alpha chains (FadB) and two beta chains (FadA).

The enzyme catalyses a (3S)-3-hydroxyacyl-CoA + NAD(+) = a 3-oxoacyl-CoA + NADH + H(+). The catalysed reaction is a (3S)-3-hydroxyacyl-CoA = a (2E)-enoyl-CoA + H2O. It catalyses the reaction a 4-saturated-(3S)-3-hydroxyacyl-CoA = a (3E)-enoyl-CoA + H2O. It carries out the reaction (3S)-3-hydroxybutanoyl-CoA = (3R)-3-hydroxybutanoyl-CoA. The enzyme catalyses a (3Z)-enoyl-CoA = a 4-saturated (2E)-enoyl-CoA. The catalysed reaction is a (3E)-enoyl-CoA = a 4-saturated (2E)-enoyl-CoA. It participates in lipid metabolism; fatty acid beta-oxidation. Functionally, involved in the aerobic and anaerobic degradation of long-chain fatty acids via beta-oxidation cycle. Catalyzes the formation of 3-oxoacyl-CoA from enoyl-CoA via L-3-hydroxyacyl-CoA. It can also use D-3-hydroxyacyl-CoA and cis-3-enoyl-CoA as substrate. In Pseudomonas fluorescens (strain Pf0-1), this protein is Fatty acid oxidation complex subunit alpha.